We begin with the raw amino-acid sequence, 318 residues long: V-set and immunoglobulin domain-containing protein 1 (318 aa).

The first 19 residues, 1 to 19, serve as a signal peptide directing secretion; the sequence is MSFLLFITLGLSLTALSHC. Positions 20–131 constitute an Ig-like V-type domain; the sequence is VQVTIQNPII…SSGQGKILLT (112 aa). The Extracellular portion of the chain corresponds to 20–233; that stretch reads VQVTIQNPII…TGGEGGVIAA (214 aa). 2 disulfides stabilise this stretch: Cys41/Cys114 and Cys157/Cys207. The 88-residue stretch at 136–223 folds into the Ig-like C2-type domain; sequence PSVPHCSIRG…GNATCELNLH (88 aa). The helical transmembrane segment at 234-254 threads the bilayer; sequence AVIGGLLAAAIIIAIVWFLVV. At 255 to 318 the chain is on the cytoplasmic side; that stretch reads KRKQKKQLPP…ANGETEEPTA (64 aa). A disordered region spans residues 261–318; that stretch reads QLPPTKEMKTGGNQYMAVSGEANEPPKENLGASEPTETIQFHDHAENAANGETEEPTA.

As to expression, expressed in thymocytes.

The protein resides in the membrane. This Xenopus laevis (African clawed frog) protein is V-set and immunoglobulin domain-containing protein 1 (vsig1).